Here is a 63-residue protein sequence, read N- to C-terminus: MAKVPIAFLKFVIVLILFIAMSGMIEACIGNGGRCNENVGPPYCCSGFCLRQPNQGYGVCRNR.

A signal peptide spans 1 to 27; sequence MAKVPIAFLKFVIVLILFIAMSGMIEA. 3 disulfides stabilise this stretch: cysteine 28–cysteine 45, cysteine 35–cysteine 49, and cysteine 44–cysteine 60.

It belongs to the AMP family. Homodimer. Seed specific.

It is found in the secreted. Its function is as follows. Possesses antifungal activity and is also active on two tested Gram-positive bacteria but is non-toxic for Gram-negative bacteria and cultured human cells. The protein is Antimicrobial peptide 2 (AMP2) of Mirabilis jalapa (Garden four-o'clock).